The following is a 337-amino-acid chain: Visual pigment-like receptor peropsin (337 aa).

The Extracellular segment spans residues 1–26 (MLSEASDFNSSGSRSEGSVFSRTEHS). Asn9 is a glycosylation site (N-linked (GlcNAc...) asparagine). Residues 27–49 (VIAAYLIVAGITSILSNVVVLGI) traverse the membrane as a helical segment. Topologically, residues 50–61 (FIKYKELRTPTN) are cytoplasmic. Residues 62-87 (AVIINLAFTDIGVSSIGYPMSAASDL) traverse the membrane as a helical segment. Topologically, residues 88–101 (HGSWKFGHAGCQIY) are extracellular. An intrachain disulfide couples Cys98 to Cys175. The helical transmembrane segment at 102–121 (AGLNIFFGMVSIGLLTVVAM) threads the bilayer. At 122 to 140 (DRYLTISCPDVGRRMTTNT) the chain is on the cytoplasmic side. Residues 141–164 (YLSMILGAWINGLFWALMPIIGWA) form a helical membrane-spanning segment. At 165–188 (SYAPDPTGATCTINWRNNDTSFVS) the chain is on the extracellular side. Residue Asn182 is glycosylated (N-linked (GlcNAc...) asparagine). The helical transmembrane segment at 189–212 (YTMMVIVVNFIVPLTVMFYCYYHV) threads the bilayer. Residues 213–240 (SRSLRLYAASDCTAHLHRDWADQADVTK) lie on the Cytoplasmic side of the membrane. Residues 241–264 (MSVIMILMFLLAWSPYSIVCLWAC) traverse the membrane as a helical segment. The Extracellular segment spans residues 265-272 (FGNPKKIP). A helical transmembrane segment spans residues 273 to 297 (PSMAIIAPLFAKSSTFYNPCIYVAA). Lys284 carries the N6-(retinylidene)lysine modification. Residues 298–337 (HKKFRKAMLAMFKCQPHLAVPEPSTLPMDMPQSSLAPVRI) lie on the Cytoplasmic side of the membrane.

It belongs to the G-protein coupled receptor 1 family. Opsin subfamily. Found only in the eye, where it is localized to the retinal pigment epithelium (RPE). In the RPE, it is localized to the microvilli that surround the photoreceptor outer segments.

The protein resides in the membrane. In terms of biological role, may play a role in rpe physiology either by detecting light directly or by monitoring the concentration of retinoids or other photoreceptor-derived compounds. This chain is Visual pigment-like receptor peropsin (Rrh), found in Mus musculus (Mouse).